Consider the following 351-residue polypeptide: Glycerol-3-phosphate dehydrogenase 1-like protein (351 aa).

NAD(+) is bound at residue 12–17 (GSGNWG). Residue Lys122 coordinates substrate. An NAD(+)-binding site is contributed by Ala155. Lys206 functions as the Proton acceptor in the catalytic mechanism. NAD(+) is bound by residues Arg271, Lys298, and Gln300. 271–272 (RN) provides a ligand contact to substrate.

Belongs to the NAD-dependent glycerol-3-phosphate dehydrogenase family. Interacts with SCN5A. Most highly expressed in heart tissue, with lower levels in the skeletal muscle, kidney, lung and other organs.

It is found in the cytoplasm. It carries out the reaction sn-glycerol 3-phosphate + NAD(+) = dihydroxyacetone phosphate + NADH + H(+). Functionally, plays a role in regulating cardiac sodium current; decreased enzymatic activity with resulting increased levels of glycerol 3-phosphate activating the DPD1L-dependent SCN5A phosphorylation pathway, may ultimately lead to decreased sodium current; cardiac sodium current may also be reduced due to alterations of NAD(H) balance induced by DPD1L. This is Glycerol-3-phosphate dehydrogenase 1-like protein from Homo sapiens (Human).